We begin with the raw amino-acid sequence, 570 residues long: Probable D-xylulose kinase A (570 aa).

Substrate contacts are provided by H98, D279, and N280. Residues W363, G470–G471, and N474 contribute to the ATP site.

This sequence belongs to the FGGY kinase family.

The protein localises to the cytoplasm. The catalysed reaction is D-xylulose + ATP = D-xylulose 5-phosphate + ADP + H(+). Highly specific D-xylulose kinase which participates in the catabolism of xylose. Xylose is a major component of hemicelluloses such as xylan. Most fungi utilize D-xylose via three enzymatic reactions, xylose reductase (XR), xylitol dehydrogenase (XDH), and xylulokinase, to form xylulose 5-phosphate, which enters pentose phosphate pathway. The chain is Probable D-xylulose kinase A (xkiA) from Arthroderma otae (strain ATCC MYA-4605 / CBS 113480) (Microsporum canis).